Here is a 43-residue protein sequence, read N- to C-terminus: Protein PsbN (43 aa).

Residues 7–29 (ITIFLSGLLVSFTGYALYTAFGQ) form a helical membrane-spanning segment.

This sequence belongs to the PsbN family.

It is found in the plastid membrane. In terms of biological role, may play a role in photosystem I and II biogenesis. In Cuscuta reflexa (Southern Asian dodder), this protein is Protein PsbN.